The chain runs to 622 residues: Elongation factor 4 (622 aa).

Residues 17 to 201 (ALIRNFCIIA…KVVAEVPAPV (185 aa)) form the tr-type G domain. GTP contacts are provided by residues 29 to 34 (DHGKST) and 148 to 151 (NKID).

The protein belongs to the TRAFAC class translation factor GTPase superfamily. Classic translation factor GTPase family. LepA subfamily.

It is found in the cell membrane. It catalyses the reaction GTP + H2O = GDP + phosphate + H(+). Its function is as follows. Required for accurate and efficient protein synthesis under certain stress conditions. May act as a fidelity factor of the translation reaction, by catalyzing a one-codon backward translocation of tRNAs on improperly translocated ribosomes. Back-translocation proceeds from a post-translocation (POST) complex to a pre-translocation (PRE) complex, thus giving elongation factor G a second chance to translocate the tRNAs correctly. Binds to ribosomes in a GTP-dependent manner. This is Elongation factor 4 from Streptomyces avermitilis (strain ATCC 31267 / DSM 46492 / JCM 5070 / NBRC 14893 / NCIMB 12804 / NRRL 8165 / MA-4680).